Reading from the N-terminus, the 190-residue chain is HTH-type transcriptional repressor AcnR (190 aa).

Positions Ser10–Met70 constitute an HTH tetR-type domain. The segment at residues Thr33–Phe52 is a DNA-binding region (H-T-H motif). Residues Leu79–Val80, Arg130, and Asn134 contribute to the citrate site. Glu181 is a Mg(2+) binding site. Position 185 (Arg185) interacts with citrate.

In terms of assembly, homodimer.

Functionally, acnR negatively controls the expression of the aconitase gene acn. The chain is HTH-type transcriptional repressor AcnR from Corynebacterium diphtheriae (strain ATCC 700971 / NCTC 13129 / Biotype gravis).